The sequence spans 131 residues: DNA-directed RNA polymerases I, II, and III subunit RPABC2 (131 aa).

Residues 1–24 form a disordered region; the sequence is MDDADYDNDDVGGDDFDDVDEDVD.

This sequence belongs to the archaeal Rpo6/eukaryotic RPB6 RNA polymerase subunit family. In terms of assembly, component of the RNA polymerase I (Pol I), RNA polymerase II (Pol II) and RNA polymerase III (Pol III) complexes consisting of at least 13, 12 and 17 subunits, respectively.

It is found in the nucleus. Its function is as follows. DNA-dependent RNA polymerases catalyze the transcription of DNA into RNA using the four ribonucleoside triphosphates as substrates. Common component of RNA polymerases I, II and III which synthesize ribosomal RNA precursors, mRNA precursors and many functional non-coding RNAs, and small RNAs, such as 5S rRNA and tRNAs, respectively. Pol II is the central component of the basal RNA polymerase II transcription machinery. Pols are composed of mobile elements that move relative to each other. In Pol II, Polr2F/RPB6 is part of the clamp element and together with parts of Polr2A/RPB1 and RPB2 forms a pocket to which the Polr2D/RPB4-Polr2G/RPB7 subcomplex binds. This chain is DNA-directed RNA polymerases I, II, and III subunit RPABC2, found in Drosophila melanogaster (Fruit fly).